The sequence spans 400 residues: Subtilisin-like protease 11 (400 aa).

The signal sequence occupies residues 1–19; that stretch reads MGLFTVVFTAIAALSAVDA. Residues 20–117 constitute a propeptide that is removed on maturation; that stretch reads AELLRSPNSK…VEHDRYVYID (98 aa). Residues 35–116 enclose the Inhibitor I9 domain; sequence SYLVVMKDSV…FVEHDRYVYI (82 aa). The Peptidase S8 domain occupies 127 to 400; the sequence is SWGLGRVSHR…NKLLYNGSGQ (274 aa). An N-linked (GlcNAc...) asparagine glycan is attached at N138. Residues D159 and H191 each act as charge relay system in the active site. 3 N-linked (GlcNAc...) asparagine glycosylation sites follow: N252, N336, and N337. Residue S346 is the Charge relay system of the active site. N-linked (GlcNAc...) asparagine glycosylation is found at N388 and N396.

It belongs to the peptidase S8 family.

The protein resides in the secreted. In terms of biological role, secreted subtilisin-like serine protease with keratinolytic activity that contributes to pathogenicity. This chain is Subtilisin-like protease 11 (SUB11), found in Arthroderma gypseum (strain ATCC MYA-4604 / CBS 118893) (Microsporum gypseum).